The sequence spans 325 residues: Small ribosomal subunit protein RACK1 (325 aa).

WD repeat units follow at residues 5 to 48 (QMKL…WDVD), 58 to 99 (IGRP…WDLN), 100 to 141 (QGVS…WNTL), 143 to 186 (QCKY…WNLG), 187 to 227 (NCRL…LWDL), 228 to 268 (NEGK…WDLE), and 269 to 320 (DKKE…YQVS).

This sequence belongs to the WD repeat G protein beta family. Ribosomal protein RACK1 subfamily.

Its function is as follows. Required for the expression of antimicrobial peptide nlp-29 in response to fungal infection or physical injury. This chain is Small ribosomal subunit protein RACK1 (rack-1), found in Caenorhabditis elegans.